A 366-amino-acid polypeptide reads, in one-letter code: Alanine racemase (366 aa).

Lys-40 functions as the Proton acceptor; specific for D-alanine in the catalytic mechanism. Lys-40 is modified (N6-(pyridoxal phosphate)lysine). Residue Arg-136 coordinates substrate. Tyr-263 functions as the Proton acceptor; specific for L-alanine in the catalytic mechanism. Met-310 contributes to the substrate binding site.

The protein belongs to the alanine racemase family. It depends on pyridoxal 5'-phosphate as a cofactor.

The enzyme catalyses L-alanine = D-alanine. Its pathway is amino-acid biosynthesis; D-alanine biosynthesis; D-alanine from L-alanine: step 1/1. Functionally, catalyzes the interconversion of L-alanine and D-alanine. May also act on other amino acids. The sequence is that of Alanine racemase (alr) from Streptococcus pyogenes serotype M12 (strain MGAS2096).